A 465-amino-acid chain; its full sequence is Putative adhesin P1-like protein MPN_286 (465 aa).

Disordered regions lie at residues 9 to 48, 59 to 78, and 93 to 167; these read GNGH…STFS, QGTL…PKWP, and WRND…LPPN. Low complexity predominate over residues 21–37; the sequence is SNSSTSGVTTQGQQSQN. Polar residues predominate over residues 38-48; that stretch reads ASGTEPASTFS. Over residues 111–131 the composition is skewed to low complexity; sequence TSATGSGQQGSSSGTTNSAGN. A compositionally biased stretch (basic and acidic residues) spans 135-144; sequence LKQDKVDKSG. Over residues 145-156 the composition is skewed to polar residues; that stretch reads DSVTVAETTSGD. Low complexity predominate over residues 157–167; it reads NLTNYTNLPPN.

The protein belongs to the adhesin P1 family.

This is Putative adhesin P1-like protein MPN_286 from Mycoplasma pneumoniae (strain ATCC 29342 / M129 / Subtype 1) (Mycoplasmoides pneumoniae).